We begin with the raw amino-acid sequence, 82 residues long: Diphthamide biosynthesis protein 3 (82 aa).

One can recognise a DPH-type MB domain in the interval 8-64; sequence IYDEVEIEDMTYDPALQTYSYPCPCGDKFEIALADLQDGQDIAVCPSCSLMVRVIFE. Fe cation contacts are provided by C30, C32, C52, and C55.

It belongs to the DPH3 family. Component of the 2-(3-amino-3-carboxypropyl)histidine synthase complex composed of dph-1, dph-2, dph-3 and a NADH-dependent reductase, predominantly cbr-1. Fe(2+) serves as cofactor.

It is found in the cytoplasm. It localises to the nucleus. The enzyme catalyses [3Fe-4S](1+)-[protein] + Fe(2+)-[Dph3] = [3Fe-4S](0)-[protein] + Fe(3+)-[Dph3]. It carries out the reaction 2 [3Fe-4S](0)-[protein] + 2 Fe(2+)-[Dph3] + NADH = 2 [4Fe-4S](1+)-[protein] + 2 [Dph3] + NAD(+) + H(+). The protein operates within protein modification; peptidyl-diphthamide biosynthesis. Functionally, required for the first step of diphthamide biosynthesis, a post-translational modification of histidine which occurs in elongation factor 2. Dph-1 and dph-2 transfer a 3-amino-3-carboxypropyl (ACP) group from S-adenosyl-L-methionine (SAM) to a histidine residue, the reaction is assisted by a reduction system comprising dph-3 and a NADH-dependent reductase, predominantly cbr-1. Acts as an electron donor to reduce the Fe-S cluster in dph1-dph2 keeping the [4Fe-4S] clusters in the active and reduced state. Restores iron to dph-1-dph-2 iron-sulfur clusters which have degraded from [4Fe-4S] to [3Fe-4S] by donating an iron atom to reform [4Fe-4S] clusters, in a manner dependent on the presence of elongation factor 2 and SAM. Associates with the elongator complex and is required for tRNA Wobble base modifications mediated by the elongator complex. The elongator complex is required for multiple tRNA modifications, including mcm5U (5-methoxycarbonylmethyl uridine), mcm5s 2U (5-methoxycarbonylmethyl-2-thiouridine), and ncm5U (5-carbamoylmethyl uridine). This is Diphthamide biosynthesis protein 3 (dph-3) from Neurospora crassa (strain ATCC 24698 / 74-OR23-1A / CBS 708.71 / DSM 1257 / FGSC 987).